Reading from the N-terminus, the 539-residue chain is Kynureninase 2 (539 aa).

Positions 60–87 (DGGVAGETKEPRVPNGVSSATKPNGTVN) are disordered. The span at 75–87 (GVSSATKPNGTVN) shows a compositional bias: polar residues. Pyridoxal 5'-phosphate contacts are provided by residues Leu-171, Thr-172, 199 to 202 (FPSD), Asp-290, His-293, and Tyr-315. The residue at position 316 (Lys-316) is an N6-(pyridoxal phosphate)lysine. The segment covering 340–352 (GGGGSGGVGGGRG) has biased composition (gly residues). The segment at 340 to 363 (GGGGSGGVGGGRGEGGDGDGGDGG) is disordered. Trp-379 and Asn-407 together coordinate pyridoxal 5'-phosphate.

Belongs to the kynureninase family. In terms of assembly, homodimer. Requires pyridoxal 5'-phosphate as cofactor.

It localises to the cytoplasm. The enzyme catalyses L-kynurenine + H2O = anthranilate + L-alanine + H(+). It carries out the reaction 3-hydroxy-L-kynurenine + H2O = 3-hydroxyanthranilate + L-alanine + H(+). It participates in amino-acid degradation; L-kynurenine degradation; L-alanine and anthranilate from L-kynurenine: step 1/1. It functions in the pathway cofactor biosynthesis; NAD(+) biosynthesis; quinolinate from L-kynurenine: step 2/3. Functionally, catalyzes the cleavage of L-kynurenine (L-Kyn) and L-3-hydroxykynurenine (L-3OHKyn) into anthranilic acid (AA) and 3-hydroxyanthranilic acid (3-OHAA), respectively. The sequence is that of Kynureninase 2 from Chaetomium globosum (strain ATCC 6205 / CBS 148.51 / DSM 1962 / NBRC 6347 / NRRL 1970) (Soil fungus).